Reading from the N-terminus, the 633-residue chain is Probable potassium transport system protein Kup 2 (633 aa).

12 consecutive transmembrane segments (helical) span residues 18 to 38 (FLAMTIGAIGVVYGDIGTSPL), 61 to 81 (LISLMLWTLTIIVTFKYVLFL), 109 to 129 (LMFMAGILGAALFIGDAMITP), 145 to 165 (PAFHDYVLPISVGIMVLLFAV), 173 to 193 (VSIFFGPITLIWFLVLGAAGV), 211 to 231 (AVTFLWNAGFVGFIVLGAVFL), 255 to 275 (WFAVVFPALTLNYLGQGALVL), 287 to 307 (LMFPNWALLPVVLLATAATII), 345 to 365 (IYLPFVNNALLAGVIVLMFMF), 371 to 391 (LATAYGISVTGAMVVTTVLAF), 405 to 425 (ATAVLLPLLVLELFFLGANLF), and 427 to 447 (IHDGGYVPILIAGTLMTTMWT).

This sequence belongs to the HAK/KUP transporter (TC 2.A.72) family.

It is found in the cell inner membrane. It catalyses the reaction K(+)(in) + H(+)(in) = K(+)(out) + H(+)(out). Its function is as follows. Transport of potassium into the cell. Likely operates as a K(+):H(+) symporter. The sequence is that of Probable potassium transport system protein Kup 2 from Sinorhizobium medicae (strain WSM419) (Ensifer medicae).